We begin with the raw amino-acid sequence, 281 residues long: Clc-like protein 5 (281 aa).

A run of 4 helical transmembrane segments spans residues 13 to 33 (LATL…TITP), 104 to 124 (VLIL…AVIF), 137 to 157 (IMLD…LIVF), and 184 to 204 (YYLA…AALV).

Belongs to the Clc family.

The protein localises to the membrane. The sequence is that of Clc-like protein 5 (clc-5) from Caenorhabditis elegans.